A 565-amino-acid polypeptide reads, in one-letter code: Proline--tRNA ligase (565 aa).

This sequence belongs to the class-II aminoacyl-tRNA synthetase family. ProS type 1 subfamily. As to quaternary structure, homodimer.

Its subcellular location is the cytoplasm. The enzyme catalyses tRNA(Pro) + L-proline + ATP = L-prolyl-tRNA(Pro) + AMP + diphosphate. In terms of biological role, catalyzes the attachment of proline to tRNA(Pro) in a two-step reaction: proline is first activated by ATP to form Pro-AMP and then transferred to the acceptor end of tRNA(Pro). As ProRS can inadvertently accommodate and process non-cognate amino acids such as alanine and cysteine, to avoid such errors it has two additional distinct editing activities against alanine. One activity is designated as 'pretransfer' editing and involves the tRNA(Pro)-independent hydrolysis of activated Ala-AMP. The other activity is designated 'posttransfer' editing and involves deacylation of mischarged Ala-tRNA(Pro). The misacylated Cys-tRNA(Pro) is not edited by ProRS. This Lactobacillus delbrueckii subsp. bulgaricus (strain ATCC BAA-365 / Lb-18) protein is Proline--tRNA ligase.